The chain runs to 257 residues: Deoxyribose-phosphate aldolase (257 aa).

The Proton donor/acceptor role is filled by D102. K166 (schiff-base intermediate with acetaldehyde) is an active-site residue. Residue K198 is the Proton donor/acceptor of the active site.

Belongs to the DeoC/FbaB aldolase family. DeoC type 2 subfamily.

The protein resides in the cytoplasm. It catalyses the reaction 2-deoxy-D-ribose 5-phosphate = D-glyceraldehyde 3-phosphate + acetaldehyde. Its pathway is carbohydrate degradation; 2-deoxy-D-ribose 1-phosphate degradation; D-glyceraldehyde 3-phosphate and acetaldehyde from 2-deoxy-alpha-D-ribose 1-phosphate: step 2/2. Functionally, catalyzes a reversible aldol reaction between acetaldehyde and D-glyceraldehyde 3-phosphate to generate 2-deoxy-D-ribose 5-phosphate. In Shewanella halifaxensis (strain HAW-EB4), this protein is Deoxyribose-phosphate aldolase.